The sequence spans 449 residues: Hyaluronidase-3 (449 aa).

A signal peptide spans 1-23; sequence MYHIWIKFLAAWIFLKKFNGVHV. 2 cysteine pairs are disulfide-bonded: C47-C340 and C211-C227. N67, N103, and N111 each carry an N-linked (GlcNAc...) asparagine glycan. E135 functions as the Proton donor in the catalytic mechanism. Residue N153 is glycosylated (N-linked (GlcNAc...) asparagine). N357 carries N-linked (GlcNAc...) asparagine glycosylation. Intrachain disulfides connect C365–C376, C370–C427, and C429–C438. N401 is a glycosylation site (N-linked (GlcNAc...) asparagine). Positions 427–438 constitute an EGF-like domain; sequence CQCYQGWKGLYC.

This sequence belongs to the glycosyl hydrolase 56 family. Monomer. In terms of tissue distribution, expressed by the venom gland.

Its subcellular location is the secreted. It catalyses the reaction Random hydrolysis of (1-&gt;4)-linkages between N-acetyl-beta-D-glucosamine and D-glucuronate residues in hyaluronate.. Its function is as follows. Snake venom endo-hyaluronidase that degrades hyaluronan to smaller oligosaccharide fragments. In venom, it is not toxic by itself, but increases the diffusion of other venom proteins by degrading the extracellular matrix. In addition, it displays antiedematogenic activity. The polypeptide is Hyaluronidase-3 (Cerastes cerastes (Horned desert viper)).